The following is a 495-amino-acid chain: N-succinylglutamate 5-semialdehyde dehydrogenase (495 aa).

Residue 220 to 225 (GSAGTG) coordinates NAD(+). Catalysis depends on residues glutamate 243 and cysteine 277.

Belongs to the aldehyde dehydrogenase family. AstD subfamily.

It carries out the reaction N-succinyl-L-glutamate 5-semialdehyde + NAD(+) + H2O = N-succinyl-L-glutamate + NADH + 2 H(+). The protein operates within amino-acid degradation; L-arginine degradation via AST pathway; L-glutamate and succinate from L-arginine: step 4/5. Its function is as follows. Catalyzes the NAD-dependent reduction of succinylglutamate semialdehyde into succinylglutamate. This Enterobacter sp. (strain 638) protein is N-succinylglutamate 5-semialdehyde dehydrogenase.